The sequence spans 310 residues: Probable manganese-dependent inorganic pyrophosphatase (310 aa).

Positions 9, 13, 15, 76, 98, and 150 each coordinate Mn(2+).

This sequence belongs to the PPase class C family. Requires Mn(2+) as cofactor.

It is found in the cytoplasm. It catalyses the reaction diphosphate + H2O = 2 phosphate + H(+). The polypeptide is Probable manganese-dependent inorganic pyrophosphatase (Streptococcus thermophilus (strain ATCC BAA-491 / LMD-9)).